Here is a 207-residue protein sequence, read N- to C-terminus: Small ribosomal subunit protein uS4c (207 aa).

The S4 RNA-binding domain maps to 92-156; that stretch reads MRLDNILFRL…YQSIITKRIE (65 aa).

The protein belongs to the universal ribosomal protein uS4 family. Part of the 30S ribosomal subunit. Contacts protein S5. The interaction surface between S4 and S5 is involved in control of translational fidelity.

The protein resides in the plastid. It is found in the chloroplast. One of the primary rRNA binding proteins, it binds directly to 16S rRNA where it nucleates assembly of the body of the 30S subunit. Its function is as follows. With S5 and S12 plays an important role in translational accuracy. This chain is Small ribosomal subunit protein uS4c (rps4), found in Equisetum palustre (Marsh horsetail).